The following is a 287-amino-acid chain: Glutamate racemase (287 aa).

The span at 1–15 shows a compositional bias: polar residues; that stretch reads MATKPQDANTTSREA. The tract at residues 1–25 is disordered; that stretch reads MATKPQDANTTSREAITSKADSPPR. Residues 32–33 and 64–65 each bind substrate; these read DS and YG. Cys96 (proton donor/acceptor) is an active-site residue. 97–98 serves as a coordination point for substrate; sequence NT. Residue Cys208 is the Proton donor/acceptor of the active site. 209-210 is a binding site for substrate; sequence TH.

The protein belongs to the aspartate/glutamate racemases family.

It catalyses the reaction L-glutamate = D-glutamate. The protein operates within cell wall biogenesis; peptidoglycan biosynthesis. Its function is as follows. Provides the (R)-glutamate required for cell wall biosynthesis. This Yersinia pseudotuberculosis serotype O:1b (strain IP 31758) protein is Glutamate racemase.